The following is a 69-amino-acid chain: Cytochrome c oxidase subunit 8A, mitochondrial (69 aa).

A mitochondrion-targeting transit peptide spans M1 to R25. Positions S2–L19 match the SIFI-degron motif. The Mitochondrial matrix portion of the chain corresponds to V26–G36. The chain crosses the membrane as a helical span at residues T37–S60. At H61–E69 the chain is on the mitochondrial intermembrane side.

Belongs to the cytochrome c oxidase VIII family. In terms of assembly, component of the cytochrome c oxidase (complex IV, CIV), a multisubunit enzyme composed of 14 subunits. The complex is composed of a catalytic core of 3 subunits MT-CO1, MT-CO2 and MT-CO3, encoded in the mitochondrial DNA, and 11 supernumerary subunits COX4I, COX5A, COX5B, COX6A, COX6B, COX6C, COX7A, COX7B, COX7C, COX8 and NDUFA4, which are encoded in the nuclear genome. The complex exists as a monomer or a dimer and forms supercomplexes (SCs) in the inner mitochondrial membrane with NADH-ubiquinone oxidoreductase (complex I, CI) and ubiquinol-cytochrome c oxidoreductase (cytochrome b-c1 complex, complex III, CIII), resulting in different assemblies (supercomplex SCI(1)III(2)IV(1) and megacomplex MCI(2)III(2)IV(2)). In response to mitochondrial stress, the precursor protein is ubiquitinated by the SIFI complex in the cytoplasm before mitochondrial import, leading to its degradation. Within the SIFI complex, UBR4 initiates ubiquitin chain that are further elongated or branched by KCMF1.

The protein resides in the mitochondrion inner membrane. It functions in the pathway energy metabolism; oxidative phosphorylation. Component of the cytochrome c oxidase, the last enzyme in the mitochondrial electron transport chain which drives oxidative phosphorylation. The respiratory chain contains 3 multisubunit complexes succinate dehydrogenase (complex II, CII), ubiquinol-cytochrome c oxidoreductase (cytochrome b-c1 complex, complex III, CIII) and cytochrome c oxidase (complex IV, CIV), that cooperate to transfer electrons derived from NADH and succinate to molecular oxygen, creating an electrochemical gradient over the inner membrane that drives transmembrane transport and the ATP synthase. Cytochrome c oxidase is the component of the respiratory chain that catalyzes the reduction of oxygen to water. Electrons originating from reduced cytochrome c in the intermembrane space (IMS) are transferred via the dinuclear copper A center (CU(A)) of subunit 2 and heme A of subunit 1 to the active site in subunit 1, a binuclear center (BNC) formed by heme A3 and copper B (CU(B)). The BNC reduces molecular oxygen to 2 water molecules using 4 electrons from cytochrome c in the IMS and 4 protons from the mitochondrial matrix. This Otolemur crassicaudatus (Brown greater galago) protein is Cytochrome c oxidase subunit 8A, mitochondrial (COX8A).